A 468-amino-acid polypeptide reads, in one-letter code: Putative FBD-associated F-box protein At5g22720 (468 aa).

The F-box domain occupies 22–68; that stretch reads EDLISQLPDSLITQILFYLQTKKAVTTSVLSKRWRSLWLSTPGLVLI. Positions 375 to 433 constitute an FBD domain; that stretch reads ELRLSFVPRCLLSSLEFVEIKGCSRSNMERVKYVGEPIETKLARYFVENSTILKKLVLP.

The polypeptide is Putative FBD-associated F-box protein At5g22720 (Arabidopsis thaliana (Mouse-ear cress)).